The primary structure comprises 657 residues: Glycogen debranching enzyme (657 aa).

Aspartate 336 acts as the Nucleophile in catalysis. Glutamate 371 acts as the Proton donor in catalysis. Positions 460–479 (ANGEENRDGTNNNYSNNHGK) are disordered.

It belongs to the glycosyl hydrolase 13 family.

It carries out the reaction Hydrolysis of (1-&gt;6)-alpha-D-glucosidic linkages to branches with degrees of polymerization of three or four glucose residues in limit dextrin.. Its pathway is glycan degradation; glycogen degradation. Removes maltotriose and maltotetraose chains that are attached by 1,6-alpha-linkage to the limit dextrin main chain, generating a debranched limit dextrin. This Shigella flexneri serotype 5b (strain 8401) protein is Glycogen debranching enzyme.